We begin with the raw amino-acid sequence, 255 residues long: 14-3-3 protein epsilon (255 aa).

Met-1 bears the N-acetylmethionine mark. The residue at position 50 (Lys-50) is an N6-acetyllysine; alternate. A Glycyl lysine isopeptide (Lys-Gly) (interchain with G-Cter in SUMO2); alternate cross-link involves residue Lys-50. Ser-65 is modified (phosphoserine). N6-acetyllysine is present on residues Lys-69, Lys-118, and Lys-123. Residue Tyr-131 is modified to Phosphotyrosine. Thr-137 bears the Phosphothreonine mark. The residue at position 210 (Ser-210) is a Phosphoserine. Thr-232 is modified (phosphothreonine). The segment at 234-255 (DMQGDGEEQNKEALQDVEDENQ) is disordered.

It belongs to the 14-3-3 family. As to quaternary structure, homodimer. Heterodimerizes with YWHAZ. Interacts with PKA-phosphorylated AANAT. Interacts with ABL1 (phosphorylated form); the interaction retains it in the cytoplasm. Interacts with ARHGEF28. Interacts with BEX3. Weakly interacts with CDKN1B. Interacts with the 'Thr-369' phosphorylated form of DAPK2. Interacts with DENND1A. Interacts with GAB2. Interacts with phosphorylated GRB10. Interacts with KSR1. Interacts with NDEL1. Interacts with PI4KB, TBC1D22A and TBC1D22B. Interacts with the phosphorylated (by AKT1) form of SRPK2. Interacts with TIAM2. Interacts with the 'Ser-1134' and 'Ser-1161' phosphorylated form of SOS1. Interacts with ZFP36 (via phosphorylated form). Interacts with SLITRK1. Interacts with HSF1 (via phosphorylated form); this interaction promotes HSF1 sequestration in the cytoplasm in a ERK-dependent manner. Interacts with RIPOR2. Interacts with KLHL22; required for the nuclear localization of KLHL22 upon amino acid starvation. Interacts with CRTC1. Interacts with CRTC2 (probably when phosphorylated at 'Ser-171'). Interacts with CRTC3 (probably when phosphorylated at 'Ser-162' and/or 'Ser-273'). Interacts with ATP2B1 and ATP2B3; this interaction inhibits calcium-transporting ATPase activity. Interacts with MEFV. Interacts with RNF115. Interacts with GPR15; this interaction promotes ER-to-Golgi transport of GPR15.

It is found in the nucleus. It localises to the cytoplasm. The protein localises to the melanosome. Adapter protein implicated in the regulation of a large spectrum of both general and specialized signaling pathways. Binds to a large number of partners, usually by recognition of a phosphoserine or phosphothreonine motif. Binding generally results in the modulation of the activity of the binding partner. Positively regulates phosphorylated protein HSF1 nuclear export to the cytoplasm. The polypeptide is 14-3-3 protein epsilon (Ywhae) (Rattus norvegicus (Rat)).